The primary structure comprises 238 residues: RxLR effector protein PITG_14788 (238 aa).

Positions 1–23 are cleaved as a signal peptide; that stretch reads MKSLHAVNLVLLLLLACFAPAPA. A RxLR-dEER motif is present at residues 47 to 65; that stretch reads RLLRAHSSGKEEQKEEEER.

This sequence belongs to the RxLR effector family.

The protein localises to the secreted. The protein resides in the host cytoplasm. It is found in the host cytoskeleton. It localises to the host nucleus. Its subcellular location is the host nucleolus. Functionally, effector that enhances P.infestans colonization of Nicotiana benthamiana leaves. In Phytophthora infestans (strain T30-4) (Potato late blight agent), this protein is RxLR effector protein PITG_14788.